The sequence spans 51 residues: Large ribosomal subunit protein eL39 (51 aa).

This sequence belongs to the eukaryotic ribosomal protein eL39 family.

The polypeptide is Large ribosomal subunit protein eL39 (Methanopyrus kandleri (strain AV19 / DSM 6324 / JCM 9639 / NBRC 100938)).